A 1048-amino-acid polypeptide reads, in one-letter code: Ceruloplasmin (1048 aa).

A signal peptide spans Met-1–Ala-19. 3 Plastocyanin-like domains span residues Lys-20–Cys-200, Lys-209–Cys-357, and Asn-370–Cys-554. Residues Tyr-55, Gly-64, and Tyr-67 each contribute to the Na(+) site. Positions 120 and 122 each coordinate Cu(2+). His-120 is an O2 binding site. Lys-128 contributes to the Ca(2+) binding site. A glycan (N-linked (GlcNAc...) asparagine) is linked at Asn-138. Positions 143, 146, and 147 each coordinate Ca(2+). A disulfide bond links Cys-174 and Cys-200. Cu(2+) is bound by residues His-180 and His-182. O2 is bound at residue His-180. Residue Asn-227 is glycosylated (N-linked (GlcNAc...) asparagine). Na(+) is bound at residue Ser-256. Residues Cys-276 and Cys-357 are joined by a disulfide bond. Cu(2+) is bound by residues His-295, Cys-338, and His-343. Residues Phe-408, Gly-417, and Tyr-420 each coordinate Na(+). Cys-530 and Cys-554 are oxidised to a cystine. Residues Asn-556 and Asn-582 are each glycosylated (N-linked (GlcNAc...) asparagine). The 149-residue stretch at Arg-564–Cys-712 folds into the Plastocyanin-like 4 domain. Na(+) is bound at residue Ser-611. Cysteines 631 and 712 form a disulfide. His-650, Cys-693, His-698, and Met-703 together coordinate Cu(2+). Cys-693 functions as the Nucleophile; for glutathione peroxidase activity in the catalytic mechanism. At Ser-716 the chain carries Phosphoserine. 2 consecutive Plastocyanin-like domains span residues Gly-724–Cys-894 and Ser-902–Glu-1044. An N-linked (GlcNAc...) asparagine glycan is attached at Asn-756. The Na(+) site is built by Phe-761, Gly-770, and Tyr-773. The cysteines at positions 868 and 894 are disulfide-linked. A glycan (N-linked (GlcNAc...) asparagine) is linked at Asn-920. Position 949 (Ser-949) interacts with Na(+). 8 residues coordinate Cu(2+): His-977, His-980, His-982, His-1022, Cys-1023, His-1024, His-1028, and Met-1033. 2 residues coordinate O2: His-980 and His-982. His-1024 lines the O2 pocket.

The protein belongs to the multicopper oxidase family. In terms of assembly, found in a complex with MPO and LTF; interacts directly with MPO and LTF, which allows Fe(3+) incorporation into LTF, activation of CP ferroxidase activity and protection of CP antioxidant properties by MPO. Cu(2+) is required as a cofactor. Expressed by the liver and secreted in plasma. Also expressed in the hypothalamus, spleen and uterus. No expression in the cortex, heart, intestine or kidney.

It localises to the secreted. The enzyme catalyses 4 Fe(2+) + O2 + 4 H(+) = 4 Fe(3+) + 2 H2O. It catalyses the reaction 4 Cu(+) + O2 + 4 H(+) = 4 Cu(2+) + 2 H2O. The catalysed reaction is a hydroperoxide + 2 glutathione = an alcohol + glutathione disulfide + H2O. It carries out the reaction 4 nitric oxide + O2 + 2 H2O = 4 nitrite + 4 H(+). The enzyme catalyses 2 glutathione + H2O2 = glutathione disulfide + 2 H2O. Multifunctional blue, copper-binding (6-7 atoms per molecule) glycoprotein. It has ferroxidase activity oxidizing Fe(2+) to Fe(3+) without releasing radical oxygen species. It is involved in iron transport across the cell membrane. Copper ions provide a large number of enzymatic activites. Oxidizes highly toxic ferrous ions to the ferric state for further incorporation onto apo-transferrins, catalyzes Cu(+) oxidation and promotes the oxidation of biogenic amines such as norepinephrin and serotonin. Provides Cu(2+) ions for the ascorbate-mediated deaminase degradation of the heparan sulfate chains of GPC1. Has glutathione peroxidase-like activity, can remove both hydrogen peroxide and lipid hydroperoxide in the presence of thiols. Also shows NO-oxidase and NO2 synthase activities that determine endocrine NO homeostasis. This chain is Ceruloplasmin (CP), found in Ovis aries (Sheep).